The chain runs to 233 residues: MVSSSLTKLVFFGCLLLLTFTDNLVAGKSGKVKLNLYYESLCPGCQEFIVDDLGKIFDYDLYTITDLKLFPFGNAELSDNLTVTCQHGEEECKLNALEACALRTWPDQKSQYSFIRCVESDTKGWESCVKNSGREKAINDCYNGDLSRKLILGYATKTKNLKPPHEYVPWVTLNGKPLDDSVQSTDDLVAQICNAYKGKTTLPKVCNSSASMSKSPERKWKLQVSYANKATNY.

Residues 1–26 (MVSSSLTKLVFFGCLLLLTFTDNLVA) form the signal peptide. A disulfide bridge connects residues Cys-42 and Cys-45. Asn-80 and Asn-207 each carry an N-linked (GlcNAc...) asparagine glycan. Positions 200-233 (TTLPKVCNSSASMSKSPERKWKLQVSYANKATNY) are cleaved as a propeptide — removed in mature form.

The protein belongs to the GILT family. Dimer; disulfide-linked. As to expression, expressed in the outer integument of seed coat.

Its subcellular location is the secreted. The protein resides in the lysosome. Functionally, lysosomal thiol reductase that can reduce protein disulfide bonds. May facilitate the complete unfolding of proteins destined for lysosomal degradation. This is Gamma-interferon-responsive lysosomal thiol protein from Arabidopsis thaliana (Mouse-ear cress).